The primary structure comprises 443 residues: ATP-dependent protease ATPase subunit HslU (443 aa).

ATP-binding positions include valine 18 and 60–65; that span reads GVGKTE. Residues 139 to 160 are disordered; it reads AKNNWGQPEESGEPSSARQNFR. 3 residues coordinate ATP: aspartate 256, glutamate 321, and arginine 393.

This sequence belongs to the ClpX chaperone family. HslU subfamily. As to quaternary structure, a double ring-shaped homohexamer of HslV is capped on each side by a ring-shaped HslU homohexamer. The assembly of the HslU/HslV complex is dependent on binding of ATP.

Its subcellular location is the cytoplasm. In terms of biological role, ATPase subunit of a proteasome-like degradation complex; this subunit has chaperone activity. The binding of ATP and its subsequent hydrolysis by HslU are essential for unfolding of protein substrates subsequently hydrolyzed by HslV. HslU recognizes the N-terminal part of its protein substrates and unfolds these before they are guided to HslV for hydrolysis. This chain is ATP-dependent protease ATPase subunit HslU, found in Sodalis glossinidius (strain morsitans).